A 533-amino-acid polypeptide reads, in one-letter code: CTP synthase (533 aa).

The amidoligase domain stretch occupies residues 1-269 (MKKNLKILVI…HEILSSKLNI (269 aa)). Ser16 contributes to the CTP binding site. Position 16 (Ser16) interacts with UTP. ATP-binding positions include 17 to 22 (GIGKGV) and Asp73. Mg(2+) contacts are provided by Asp73 and Glu143. CTP-binding positions include 150-152 (DME), 190-195 (KSKPTQ), and Lys226. UTP is bound by residues 190 to 195 (KSKPTQ) and Lys226. One can recognise a Glutamine amidotransferase type-1 domain in the interval 304–533 (YAELDDSYAS…LFLGLIKACI (230 aa)). Gly355 serves as a coordination point for L-glutamine. Cys382 serves as the catalytic Nucleophile; for glutamine hydrolysis. L-glutamine contacts are provided by residues 383–386 (LGLQ), Glu406, and Arg466. Catalysis depends on residues His511 and Glu513.

It belongs to the CTP synthase family. As to quaternary structure, homotetramer.

The catalysed reaction is UTP + L-glutamine + ATP + H2O = CTP + L-glutamate + ADP + phosphate + 2 H(+). It carries out the reaction L-glutamine + H2O = L-glutamate + NH4(+). It catalyses the reaction UTP + NH4(+) + ATP = CTP + ADP + phosphate + 2 H(+). It functions in the pathway pyrimidine metabolism; CTP biosynthesis via de novo pathway; CTP from UDP: step 2/2. With respect to regulation, allosterically activated by GTP, when glutamine is the substrate; GTP has no effect on the reaction when ammonia is the substrate. The allosteric effector GTP functions by stabilizing the protein conformation that binds the tetrahedral intermediate(s) formed during glutamine hydrolysis. Inhibited by the product CTP, via allosteric rather than competitive inhibition. In terms of biological role, catalyzes the ATP-dependent amination of UTP to CTP with either L-glutamine or ammonia as the source of nitrogen. Regulates intracellular CTP levels through interactions with the four ribonucleotide triphosphates. This is CTP synthase from Borreliella afzelii (strain PKo) (Borrelia afzelii).